The following is a 304-amino-acid chain: Acetyl-coenzyme A carboxylase carboxyl transferase subunit beta (304 aa).

Residues Val23–Val292 form the CoA carboxyltransferase N-terminal domain. Cys27, Cys30, Cys46, and Cys49 together coordinate Zn(2+). The C4-type zinc-finger motif lies at Cys27–Cys49. The interval Pro283–Ala304 is disordered.

This sequence belongs to the AccD/PCCB family. As to quaternary structure, acetyl-CoA carboxylase is a heterohexamer composed of biotin carboxyl carrier protein (AccB), biotin carboxylase (AccC) and two subunits each of ACCase subunit alpha (AccA) and ACCase subunit beta (AccD). The cofactor is Zn(2+).

It localises to the cytoplasm. The catalysed reaction is N(6)-carboxybiotinyl-L-lysyl-[protein] + acetyl-CoA = N(6)-biotinyl-L-lysyl-[protein] + malonyl-CoA. The protein operates within lipid metabolism; malonyl-CoA biosynthesis; malonyl-CoA from acetyl-CoA: step 1/1. In terms of biological role, component of the acetyl coenzyme A carboxylase (ACC) complex. Biotin carboxylase (BC) catalyzes the carboxylation of biotin on its carrier protein (BCCP) and then the CO(2) group is transferred by the transcarboxylase to acetyl-CoA to form malonyl-CoA. This Salmonella agona (strain SL483) protein is Acetyl-coenzyme A carboxylase carboxyl transferase subunit beta.